We begin with the raw amino-acid sequence, 130 residues long: Small ribosomal subunit protein uS11 (130 aa).

This sequence belongs to the universal ribosomal protein uS11 family. Part of the 30S ribosomal subunit. Interacts with proteins S7 and S18. Binds to IF-3.

In terms of biological role, located on the platform of the 30S subunit, it bridges several disparate RNA helices of the 16S rRNA. Forms part of the Shine-Dalgarno cleft in the 70S ribosome. The sequence is that of Small ribosomal subunit protein uS11 from Xylella fastidiosa (strain M12).